A 510-amino-acid chain; its full sequence is Sphingolipid C9-methyltransferase B (510 aa).

N-linked (GlcNAc...) asparagine glycosylation is present at Asn55. A run of 2 helical transmembrane segments spans residues 62 to 82 (LLGG…GGGA) and 84 to 104 (TFVF…WTYA). Residue Asn175 is glycosylated (N-linked (GlcNAc...) asparagine). Residues 227–228 (YT), 264–272 (MLDIGCGWG), 290–295 (TIAENQ), and 320–321 (YR) contribute to the S-adenosyl-L-methionine site. An N-linked (GlcNAc...) asparagine glycan is attached at Asn294.

Belongs to the CFA/CMAS family.

It is found in the membrane. It catalyses the reaction a (4E,8E)-4-sphinga-4,8-dienine ceramide + S-adenosyl-L-methionine = a 9-methyl-(4E,8E)-sphinga-4,8-dienine ceramide + S-adenosyl-L-homocysteine + H(+). Its pathway is lipid metabolism; sphingolipid metabolism. Catalyzes methylation of the sphingoid base component of glucosylceramides (GluCers) at the C9-position. Sphingolipid C9-methylation requires 4,8-desaturated ceramides as substrates. Glucosylceramides play important roles in growth, differentiation and pathogenicity. The methyl group at the C9-position distinguishes fungal glucosylceramides from those of plants and animals and may thus play a role in host-pathogen interactions enabling the host to recognize the fungal attack and initiate specific defense responses. The sequence is that of Sphingolipid C9-methyltransferase B from Emericella nidulans (strain FGSC A4 / ATCC 38163 / CBS 112.46 / NRRL 194 / M139) (Aspergillus nidulans).